Consider the following 307-residue polypeptide: MKYELNGQVVLISGGSQGLGRAFAQKYIEESDSTVVIVSRSEEKLTRAGEAICGGARRLGAGGAGRLLYYACNLGDAAAVGGLFATLADAGLQVTQVLFCAGGAVPGLFAELSSAQLAAGVEMNYGTALHLAHGAVRHGARHLVFFSSAAAVYPFIGYSQYAPLKAALRALVAVLRQECDGVRVSCVYPGNFASEGYAEENRTKPAITAAIEGSSEAISCAACCDKIVRGLRSGYDDVTTDFVGWLLLACNMGFNYHSTTYFLWPLGWLLGALVNLLVVPIYMLLCRWDIHKWRTQREETHLAAKTD.

Leu-11 provides a ligand contact to NADP(+). NADPH-binding residues include Gly-14, Ser-16, and Gly-18. The GXSXG signature appears at 14-18; it reads GGSQG. Leu-19 is an NADP(+) binding site. Arg-40, Lys-44, and Leu-74 together coordinate NADPH. Ser-147 functions as the Proton donor in the catalytic mechanism. NADP(+) contacts are provided by Tyr-161, Lys-165, and Ser-194. The active-site Proton acceptor is Tyr-161. Residue Lys-165 is the Lowers pKa of active site Tyr of the active site. A helical membrane pass occupies residues 261 to 281; that stretch reads YFLWPLGWLLGALVNLLVVPI.

Belongs to the short-chain dehydrogenases/reductases (SDR) family.

Its subcellular location is the endoplasmic reticulum membrane. It carries out the reaction sphinganine + NADP(+) = 3-oxosphinganine + NADPH + H(+). Its pathway is lipid metabolism; sphingolipid metabolism. Functionally, catalyzes the reduction of 3'-oxosphinganine (3-ketodihydrosphingosine/KDS) to sphinganine (dihydrosphingosine/DHS), the second step of de novo sphingolipid biosynthesis. This chain is 3-ketodihydrosphingosine reductase TSC10 (TSC10), found in Eremothecium gossypii (strain ATCC 10895 / CBS 109.51 / FGSC 9923 / NRRL Y-1056) (Yeast).